We begin with the raw amino-acid sequence, 213 residues long: High frequency lysogenization protein HflD homolog (213 aa).

Belongs to the HflD family.

The protein resides in the cytoplasm. It localises to the cell inner membrane. The protein is High frequency lysogenization protein HflD homolog of Alcanivorax borkumensis (strain ATCC 700651 / DSM 11573 / NCIMB 13689 / SK2).